A 94-amino-acid chain; its full sequence is Large ribosomal subunit protein uL23 (94 aa).

Belongs to the universal ribosomal protein uL23 family. As to quaternary structure, part of the 50S ribosomal subunit. Contacts protein L29, and trigger factor when it is bound to the ribosome.

Its function is as follows. One of the early assembly proteins it binds 23S rRNA. One of the proteins that surrounds the polypeptide exit tunnel on the outside of the ribosome. Forms the main docking site for trigger factor binding to the ribosome. The chain is Large ribosomal subunit protein uL23 from Geobacter metallireducens (strain ATCC 53774 / DSM 7210 / GS-15).